We begin with the raw amino-acid sequence, 526 residues long: MSKRILYQEQARRALSQGMDILAEAVAVTLGPKGRNVVLEKKYSCPQIVNDGVTIAKEIDLANHMQNTGVCLIRQAASKTNEVAGDGTTTATVLAHAMIKQGLKYVASGANPMALKTGMSLATQWLVSQIRDLAQPISDHLAIKQVASLSAGNDDQVGEMISQAFEQVGADGVISLEEGKSSQTQLQITQGMRFEKGYISPYFATAGDTVVLDQPYILLTDKKITLVKQDLLPVLTLVSRTNRALLIIADDVEKEALATLILNKLRGIIQVVAVRAPGFGDRKKALLEDMAVLTGGQVITQEAGLSLETITLDLLGEARRIEVGKSYTTIVADSNKQQVKARCEQIKQQWARSDSSYEKQQLQERLAKLSSGVAVIQVGGATEAEMKDKKLRLDDAINATRAAIEEGIVAGGGSTLVHFIKPLIEWSHHLKPEEQLGAQIVAKALSAPLHRIATNAGQNGSLIVEQVQNQPNLGYDAANHRFVNMIEAGIIDPAKVTRCALQNATSIAAMVLTTECMIVDKPSGDK.

Residues 29 to 32 (TLGP), 86 to 90 (DGTTT), G412, 476 to 478 (DAA), and D492 contribute to the ATP site.

It belongs to the chaperonin (HSP60) family. In terms of assembly, forms a cylinder of 14 subunits composed of two heptameric rings stacked back-to-back. Interacts with the co-chaperonin GroES.

The protein localises to the plastid. It is found in the chloroplast. The enzyme catalyses ATP + H2O + a folded polypeptide = ADP + phosphate + an unfolded polypeptide.. Together with its co-chaperonin GroES, plays an essential role in assisting protein folding. The GroEL-GroES system forms a nano-cage that allows encapsulation of the non-native substrate proteins and provides a physical environment optimized to promote and accelerate protein folding. This chain is Chaperonin GroEL, chloroplastic, found in Cyanidioschyzon merolae (strain NIES-3377 / 10D) (Unicellular red alga).